Reading from the N-terminus, the 218-residue chain is Thiopurine S-methyltransferase (218 aa).

S-adenosyl-L-methionine is bound by residues Trp10, Leu45, Glu66, and Arg123.

It belongs to the class I-like SAM-binding methyltransferase superfamily. TPMT family.

It localises to the cytoplasm. It catalyses the reaction S-adenosyl-L-methionine + a thiopurine = S-adenosyl-L-homocysteine + a thiopurine S-methylether.. The polypeptide is Thiopurine S-methyltransferase (Pseudomonas paraeruginosa (strain DSM 24068 / PA7) (Pseudomonas aeruginosa (strain PA7))).